The chain runs to 549 residues: Protein EPD1 (549 aa).

The N-terminal stretch at 1 to 22 (MLLNSLFPSILAAATFVTSAAA) is a signal peptide. N-linked (GlcNAc...) asparagine glycans are attached at residues asparagine 40 and asparagine 59. Residues cysteine 72 and cysteine 101 are joined by a disulfide bond. Residues asparagine 147 and asparagine 163 are each glycosylated (N-linked (GlcNAc...) asparagine). 5 cysteine pairs are disulfide-bonded: cysteine 214/cysteine 347, cysteine 232/cysteine 263, cysteine 369/cysteine 420, cysteine 378/cysteine 444, and cysteine 397/cysteine 402. The span at 336–356 (AESASGVSRTSCPTNTDNWEA) shows a compositional bias: polar residues. The segment at 336-361 (AESASGVSRTSCPTNTDNWEASTELP) is disordered. An N-linked (GlcNAc...) asparagine glycan is attached at asparagine 383. Residues asparagine 408 and asparagine 438 are each glycosylated (N-linked (GlcNAc...) asparagine). Residues 479 to 519 (SVRTDTSEATTDSGSGSSNSGSASSSKSTSSSTSSGSSGSK) form a disordered region. The span at 487-519 (ATTDSGSGSSNSGSASSSKSTSSSTSSGSSGSK) shows a compositional bias: low complexity.

This sequence belongs to the glycosyl hydrolase 72 family.

Its subcellular location is the cell membrane. The polypeptide is Protein EPD1 (EPD1) (Candida maltosa (Yeast)).